Here is a 642-residue protein sequence, read N- to C-terminus: Threonine--tRNA ligase (642 aa).

A TGS domain is found at 1 to 61 (MPVITLPDGS…ETDSDLSIIT (61 aa)). Residues 243–534 (DHRKIGKQLD…LIEEYAGKFP (292 aa)) form a catalytic region. Residues cysteine 334, histidine 385, and histidine 511 each contribute to the Zn(2+) site.

Belongs to the class-II aminoacyl-tRNA synthetase family. In terms of assembly, homodimer. Requires Zn(2+) as cofactor.

The protein localises to the cytoplasm. It carries out the reaction tRNA(Thr) + L-threonine + ATP = L-threonyl-tRNA(Thr) + AMP + diphosphate + H(+). In terms of biological role, catalyzes the attachment of threonine to tRNA(Thr) in a two-step reaction: L-threonine is first activated by ATP to form Thr-AMP and then transferred to the acceptor end of tRNA(Thr). Also edits incorrectly charged L-seryl-tRNA(Thr). This chain is Threonine--tRNA ligase, found in Shewanella pealeana (strain ATCC 700345 / ANG-SQ1).